We begin with the raw amino-acid sequence, 323 residues long: O-phosphoserine sulfhydrylase (323 aa).

K51 carries the post-translational modification N6-(pyridoxal phosphate)lysine. Pyridoxal 5'-phosphate-binding positions include N81 and 184–188; that span reads GTTGT. R220 contacts substrate. S265 serves as a coordination point for pyridoxal 5'-phosphate.

This sequence belongs to the cysteine synthase/cystathionine beta-synthase family. As to quaternary structure, homodimer. Requires pyridoxal 5'-phosphate as cofactor.

It carries out the reaction [CysO sulfur-carrier protein]-C-terminal-Gly-aminoethanethioate + O-phospho-L-serine + H(+) = [CysO sulfur-carrier protein]-Gly-NH-CH2-C(O)-S-L-Cys + phosphate. It functions in the pathway amino-acid biosynthesis; L-cysteine biosynthesis. In terms of biological role, catalyzes the formation of a covalent CysO-cysteine adduct via a sulfur transfer, using the thiocarboxylated sulfur carrier protein CysO-COSH as sulfur donor and O-phospho-L-serine (OPS) as sulfur acceptor. Can also use sodium sulfide as sulfur donor in vitro, albeit with less efficiency. The chain is O-phosphoserine sulfhydrylase (cysM) from Mycobacterium bovis (strain ATCC BAA-935 / AF2122/97).